Here is an 864-residue protein sequence, read N- to C-terminus: Leucine--tRNA ligase (864 aa).

Positions P42–H52 match the 'HIGH' region motif. The 'KMSKS' region signature appears at K624–S628. K627 is an ATP binding site.

It belongs to the class-I aminoacyl-tRNA synthetase family.

It is found in the cytoplasm. The catalysed reaction is tRNA(Leu) + L-leucine + ATP = L-leucyl-tRNA(Leu) + AMP + diphosphate. This is Leucine--tRNA ligase from Burkholderia thailandensis (strain ATCC 700388 / DSM 13276 / CCUG 48851 / CIP 106301 / E264).